Consider the following 458-residue polypeptide: tRNA modification GTPase MnmE (458 aa).

Arg22, Glu84, and Arg123 together coordinate (6S)-5-formyl-5,6,7,8-tetrahydrofolate. Residues 220 to 379 form the TrmE-type G domain; it reads GISTAIIGRP…LEKAIADLFF (160 aa). Asn230 serves as a coordination point for K(+). Residues 230-235, 249-255, and 274-277 each bind GTP; these read NVGKSS, TDIAGTT, and DTAG. Ser234 is a binding site for Mg(2+). K(+)-binding residues include Thr249, Ile251, and Thr254. Thr255 is a Mg(2+) binding site. Lys458 lines the (6S)-5-formyl-5,6,7,8-tetrahydrofolate pocket.

Belongs to the TRAFAC class TrmE-Era-EngA-EngB-Septin-like GTPase superfamily. TrmE GTPase family. In terms of assembly, homodimer. Heterotetramer of two MnmE and two MnmG subunits. The cofactor is K(+).

The protein resides in the cytoplasm. In terms of biological role, exhibits a very high intrinsic GTPase hydrolysis rate. Involved in the addition of a carboxymethylaminomethyl (cmnm) group at the wobble position (U34) of certain tRNAs, forming tRNA-cmnm(5)s(2)U34. This Bacillus mycoides (strain KBAB4) (Bacillus weihenstephanensis) protein is tRNA modification GTPase MnmE.